The sequence spans 590 residues: Bacillolysin (590 aa).

The signal sequence occupies residues 1–24; it reads MKKVWFSLLGGAMLLGSVASGASA. Positions 25-286 are cleaved as a propeptide — activation peptide; the sequence is ESSVSGPAQL…GSIVFQYDII (262 aa). Asp-339, Asp-341, and Asp-419 together coordinate Ca(2+). His-423 contacts Zn(2+). The active site involves Glu-424. The Zn(2+) site is built by His-427 and Glu-447. Asp-466, Tyr-469, Thr-470, Ile-473, and Asp-476 together coordinate Ca(2+). His-507 acts as the Proton donor in catalysis.

It belongs to the peptidase M4 family. It depends on Ca(2+) as a cofactor. Zn(2+) is required as a cofactor.

The protein resides in the secreted. It carries out the reaction Similar, but not identical, to that of thermolysin.. Its function is as follows. Involved in the generation of beta- and alpha-amylases from the large amylase precursor. The sequence is that of Bacillolysin (npr) from Paenibacillus polymyxa (Bacillus polymyxa).